The chain runs to 778 residues: Exo-beta-D-glucosaminidase (778 aa).

Residues tyrosine 55, 104-105 (GE), 180-181 (DE), glutamate 308, glutamate 349, and tyrosine 381 contribute to the substrate site. The active-site Proton donor is the glutamate 181. Residue glutamate 349 is the Nucleophile of the active site.

The protein belongs to the glycosyl hydrolase 35 family. As to quaternary structure, homodimer.

Its subcellular location is the cytoplasm. The enzyme catalyses beta-D-glucosaminyl-(1-&gt;4)-N-acetyl-D-glucosamine + H2O = D-glucosamine + N-acetyl-D-glucosamine. The protein operates within glycan degradation; chitin degradation. In terms of biological role, exo-type enzyme that specifically cleaves the non-reducing terminal glycosidic bond of chitooligosaccharides. Catalyzes the hydrolysis of GlcN-GlcNAc to glucosamine (GlcN) and N-acetylglucosamine (GlcNAc). Involved in chitin degradation. Can also hydrolyze chitosan and chitooligosaccharides of various chain lengths. This is Exo-beta-D-glucosaminidase from Pyrococcus horikoshii (strain ATCC 700860 / DSM 12428 / JCM 9974 / NBRC 100139 / OT-3).